A 177-amino-acid polypeptide reads, in one-letter code: Disulfide bond formation protein B (177 aa).

Residues 1 to 14 lie on the Cytoplasmic side of the membrane; that stretch reads MLALLKQFSEKRFV. The helical transmembrane segment at 15 to 31 threads the bilayer; that stretch reads WFLLAFSSLALESTALY. Topologically, residues 32–49 are periplasmic; that stretch reads FQYGMGLQPCVLCVYERL. The cysteines at positions 41 and 44 are disulfide-linked. The chain crosses the membrane as a helical span at residues 50 to 65; it reads AMIGLFVAGIIALLQP. Residues 66–72 are Cytoplasmic-facing; sequence LAFILRL. A helical membrane pass occupies residues 73-90; the sequence is IALALGLFSSIKGLLISF. The Periplasmic segment spans residues 91–145; the sequence is RHLDLQMNPAPWKQCEFIPNFPETLPFHQWFPFIFNPTGSCNESQWSLFGLTMVQ. The cysteines at positions 105 and 131 are disulfide-linked. The helical transmembrane segment at 146 to 164 threads the bilayer; that stretch reads WLVVIFSLYVVILTLLLIA. The Cytoplasmic segment spans residues 165–177; the sequence is QVIKTRKQRRLFN.

Belongs to the DsbB family.

The protein localises to the cell inner membrane. Required for disulfide bond formation in some periplasmic proteins. Acts by oxidizing the DsbA protein. The chain is Disulfide bond formation protein B from Haemophilus influenzae (strain 86-028NP).